We begin with the raw amino-acid sequence, 724 residues long: Probable metal-nicotianamine transporter YSL13 (724 aa).

Residues 1 to 54 (MATVPTPSEAHGGATPTAADVEMVEASELRRRGKPSGDRATGPSRDGAAAAAEE) form a disordered region. 14 helical membrane passes run 80-100 (AFVVSFFLVIMFSVIVMKLNL), 103-123 (GIIPSLNVSAGLLGFFFVRLW), 148-168 (CVVAGYDIAFSGGFGNYILSM), 190-210 (LGWIIGFLFLVSFIGLFGLVP), 252-272 (LGIFFILSFFWGFFQWFYTAT), 310-330 (IVNVSVLLGGILSWGIMWPLI), 355-375 (VFIAIALILGDGLYNFLKMII), 423-443 (IPWYVAYGGYAVVAAISIGTV), 455-475 (ILVAYIVAPILAFCNAYGTGL), 487-507 (LAIFAFGAWTGASHGGVLAGL), 541-561 (FVSQVIGTAMGCVIAPCVFWL), 603-623 (LNLCYAFFAAAIVVNLIRDLV), 640-660 (FYIGSYFAIDMFIGTVILFVW), and 675-695 (VASGMICGDGIWVLPQSVLAL).

Belongs to the YSL (TC 2.A.67.2) family. In terms of tissue distribution, expressed in leaves and at low levels in root cortex.

The protein localises to the membrane. In terms of biological role, may be involved in the transport of nicotianamine-chelated metals. This chain is Probable metal-nicotianamine transporter YSL13 (YSL13), found in Oryza sativa subsp. japonica (Rice).